The primary structure comprises 145 residues: Ribonuclease H (145 aa).

The RNase H type-1 domain maps to 1-142; sequence MDTPVYLYTD…ADDLANRGAA (142 aa). Mg(2+) contacts are provided by Asp-10, Glu-48, Asp-70, and Asp-134.

It belongs to the RNase H family. Monomer. It depends on Mg(2+) as a cofactor.

The protein resides in the cytoplasm. The enzyme catalyses Endonucleolytic cleavage to 5'-phosphomonoester.. In terms of biological role, endonuclease that specifically degrades the RNA of RNA-DNA hybrids. This Neisseria meningitidis serogroup C / serotype 2a (strain ATCC 700532 / DSM 15464 / FAM18) protein is Ribonuclease H.